We begin with the raw amino-acid sequence, 109 residues long: Cell division protein ZapA (109 aa).

Residues 71 to 99 (KTRDYASNMEQRIRMLQQTIEQALLEQGR) are a coiled coil.

It belongs to the ZapA family. Type 1 subfamily. As to quaternary structure, homodimer. Interacts with FtsZ.

It is found in the cytoplasm. In terms of biological role, activator of cell division through the inhibition of FtsZ GTPase activity, therefore promoting FtsZ assembly into bundles of protofilaments necessary for the formation of the division Z ring. It is recruited early at mid-cell but it is not essential for cell division. The polypeptide is Cell division protein ZapA (Serratia proteamaculans (strain 568)).